Reading from the N-terminus, the 179-residue chain is Large ribosomal subunit protein bL17 (179 aa).

Residues 123-161 show a composition bias toward basic and acidic residues; that stretch reads KEKDTKKKDDSKKSDDKKTSKKEAGFKSSKGESEHKKNT. The tract at residues 123–179 is disordered; sequence KEKDTKKKDDSKKSDDKKTSKKEAGFKSSKGESEHKKNTDQVVDSSSNRRYNRVKGS. Residues 162 to 171 show a composition bias toward polar residues; the sequence is DQVVDSSSNR.

Belongs to the bacterial ribosomal protein bL17 family. Part of the 50S ribosomal subunit. Contacts protein L32.

The polypeptide is Large ribosomal subunit protein bL17 (Treponema denticola (strain ATCC 35405 / DSM 14222 / CIP 103919 / JCM 8153 / KCTC 15104)).